A 208-amino-acid chain; its full sequence is Neuroendocrine protein 7B2 (208 aa).

The signal sequence occupies residues 1 to 26; that stretch reads MGMYSAIPLALPMVLLMVYGLTPSLG. C120 and C129 are disulfide-bonded. At S204 the chain carries Phosphoserine.

The protein belongs to the 7B2 family. As to quaternary structure, interacts with pcsk2 early in the secretory pathway. Dissociation occurs at later stages. Post-translationally, proteolytically cleaved in the Golgi by a furin-like convertase to generate bioactive peptides. Sulfated on tyrosine residues.

It is found in the secreted. Acts as a molecular chaperone for pcsk2, preventing its premature activation in the regulated secretory pathway. Binds to inactive pcsk2 in the endoplasmic reticulum and facilitates its transport from there to later compartments of the secretory pathway where it is proteolytically matured and activated. Also required for cleavage of pcsk2 but does not appear to be involved in its folding. In Xenopus laevis (African clawed frog), this protein is Neuroendocrine protein 7B2 (scg5.L).